Here is a 286-residue protein sequence, read N- to C-terminus: Elongation factor Ts (286 aa).

The tract at residues 79-82 (TDFV) is involved in Mg(2+) ion dislocation from EF-Tu.

This sequence belongs to the EF-Ts family.

It is found in the cytoplasm. Its function is as follows. Associates with the EF-Tu.GDP complex and induces the exchange of GDP to GTP. It remains bound to the aminoacyl-tRNA.EF-Tu.GTP complex up to the GTP hydrolysis stage on the ribosome. The protein is Elongation factor Ts of Wolbachia sp. subsp. Drosophila simulans (strain wRi).